Consider the following 670-residue polypeptide: Zinc finger protein 526 (670 aa).

3 consecutive C2H2-type zinc fingers follow at residues 57–79 (FMCS…QEQH), 108–130 (FQCG…QDAH), and 140–163 (YQCW…KAQH). Disordered stretches follow at residues 168–196 (VAEP…KMEP) and 217–304 (GTHF…ATHP). The segment covering 171–189 (PPVPPPLPPPTPLPPPSPP) has biased composition (pro residues). The C2H2-type 4 zinc finger occupies 197–219 (YECPECSTLCATPEEFLEHQGTH). Positions 217–231 (GTHFDSLEKEERNGL) are enriched in basic and acidic residues. The segment covering 232 to 263 (EEEEEDDEEDEEDDEEMEDEEAMAEVGDDAVG) has biased composition (acidic residues). 9 consecutive C2H2-type zinc fingers follow at residues 305–327 (FHCS…GRAH), 332–354 (HECT…LRLH), 360–382 (YLCV…RRAH), 388–409 (HRCR…RRTH), 442–465 (LPCP…RAVH), 472–494 (HRCG…LRTH), 500–522 (FQCH…QLTH), 528–550 (YQCL…RRLH), and 573–595 (YYCG…QRVH). Positions 409 to 443 (HAGKSGAPPTGATAPPAPAEPTPPPPPPAPPAQLP) are disordered. Pro residues predominate over residues 423–442 (PPAPAEPTPPPPPPAPPAQL). The tract at residues 601-621 (LTLQPPRSPSPAPPPPPEPQQ) is disordered. Pro residues predominate over residues 606 to 619 (PRSPSPAPPPPPEP).

It belongs to the krueppel C2H2-type zinc-finger protein family. As to expression, widely expressed.

The protein resides in the nucleus. Its function is as follows. May be involved in transcriptional regulation. This Homo sapiens (Human) protein is Zinc finger protein 526 (ZNF526).